Here is a 55-residue protein sequence, read N- to C-terminus: Large ribosomal subunit protein bL33 (55 aa).

Belongs to the bacterial ribosomal protein bL33 family.

The chain is Large ribosomal subunit protein bL33 from Phenylobacterium zucineum (strain HLK1).